The sequence spans 155 residues: uncharacterized protein (155 aa).

The segment covering 1 to 14 (MLTLSGWITTQVPP) has biased composition (polar residues). The disordered stretch occupies residues 1-44 (MLTLSGWITTQVPPSSRAAADAKAARTGTAEQAEDPAAGTDAAD). Positions 17 to 30 (RAAADAKAARTGTA) are enriched in low complexity.

This is an uncharacterized protein from Pseudomonas aeruginosa (strain ATCC 15692 / DSM 22644 / CIP 104116 / JCM 14847 / LMG 12228 / 1C / PRS 101 / PAO1).